A 156-amino-acid chain; its full sequence is Superoxide dismutase [Cu-Zn] 2 (156 aa).

Residues H47, H49, and H64 each coordinate Cu cation. Residues C58 and C147 are joined by a disulfide bond. Positions 64, 72, 81, and 84 each coordinate Zn(2+). H121 lines the Cu cation pocket.

Belongs to the Cu-Zn superoxide dismutase family. In terms of assembly, homodimer. It depends on Cu cation as a cofactor. Zn(2+) is required as a cofactor.

It localises to the cytoplasm. It catalyses the reaction 2 superoxide + 2 H(+) = H2O2 + O2. Its function is as follows. Destroys radicals which are normally produced within the cells and which are toxic to biological systems. This Mesembryanthemum crystallinum (Common ice plant) protein is Superoxide dismutase [Cu-Zn] 2 (SODCC.2).